We begin with the raw amino-acid sequence, 168 residues long: uncharacterized protein (168 aa).

The region spanning 14–168 (IDIPLLDAAS…EYKHWIYVTK (155 aa)) is the N-acetyltransferase domain.

This sequence belongs to the acetyltransferase family.

This is an uncharacterized protein from Bacillus subtilis (strain 168).